Consider the following 1196-residue polypeptide: Chromosome partition protein Smc (1196 aa).

Position 32–39 (32–39) interacts with ATP; sequence PNGSGKSN. Coiled-coil stretches lie at residues 168–288 and 327–497; these read LKHR…SVQQ and DALE…LERK. In terms of domain architecture, SMC hinge spans 510-621; the sequence is AGILGPMAKL…VDDLDRALAL (112 aa). Coiled-coil stretches lie at residues 654–829 and 972–1026; these read LEVT…RAQQ and DRPT…KDLL.

Belongs to the SMC family. Homodimer.

Its subcellular location is the cytoplasm. Required for chromosome condensation and partitioning. This is Chromosome partition protein Smc from Mycolicibacterium paratuberculosis (strain ATCC BAA-968 / K-10) (Mycobacterium paratuberculosis).